The sequence spans 163 residues: Epithelial membrane protein 3 (163 aa).

Residues 4 to 24 (LLLVVSALHILILILLFVATL) form a helical membrane-spanning segment. 2 N-linked (GlcNAc...) asparagine glycosylation sites follow: Asn47 and Asn56. A run of 3 helical transmembrane segments spans residues 66–86 (VQVL…LFMF), 100–120 (TGLC…IYAI), and 139–159 (FALA…YIHL).

It belongs to the PMP-22/EMP/MP20 family.

The protein resides in the membrane. In terms of biological role, probably involved in cell proliferation and cell-cell interactions. In Homo sapiens (Human), this protein is Epithelial membrane protein 3 (EMP3).